Here is a 288-residue protein sequence, read N- to C-terminus: Protoheme IX farnesyltransferase 2 (288 aa).

9 helical membrane-spanning segments follow: residues 8 to 28 (ITKP…FFLA), 36 to 56 (LMLF…GCVV), 85 to 105 (VAFV…FQLV), 108 to 128 (LSAV…TMWY), 131 to 151 (NSVY…LVGY), 152 to 172 (LAVT…FCLW), 211 to 231 (AYVV…EAGY), 233 to 252 (YLAV…FRSI), and 267 to 287 (VSLL…IPLA).

Belongs to the UbiA prenyltransferase family. Protoheme IX farnesyltransferase subfamily.

Its subcellular location is the cell inner membrane. It carries out the reaction heme b + (2E,6E)-farnesyl diphosphate + H2O = Fe(II)-heme o + diphosphate. It functions in the pathway porphyrin-containing compound metabolism; heme O biosynthesis; heme O from protoheme: step 1/1. Its function is as follows. Converts heme B (protoheme IX) to heme O by substitution of the vinyl group on carbon 2 of heme B porphyrin ring with a hydroxyethyl farnesyl side group. The sequence is that of Protoheme IX farnesyltransferase 2 from Vibrio parahaemolyticus serotype O3:K6 (strain RIMD 2210633).